Here is a 158-residue protein sequence, read N- to C-terminus: Small ribosomal subunit protein uS17 (158 aa).

N-acetylalanine is present on Ala-2. Arg-22 carries the citrulline modification. N6-acetyllysine occurs at positions 38, 45, and 58. The S-palmitoyl cysteine moiety is linked to residue Cys-60. Ser-67 carries the phosphoserine modification. The residue at position 69 (Arg-69) is an Omega-N-methylarginine. Ser-110 bears the Phosphoserine mark.

This sequence belongs to the universal ribosomal protein uS17 family. As to quaternary structure, component of the small ribosomal subunit. Part of the small subunit (SSU) processome, composed of more than 70 proteins and the RNA chaperone small nucleolar RNA (snoRNA) U3. Citrullinated by PADI4.

The protein resides in the cytoplasm. It localises to the nucleus. The protein localises to the nucleolus. Functionally, component of the small ribosomal subunit. The ribosome is a large ribonucleoprotein complex responsible for the synthesis of proteins in the cell. Part of the small subunit (SSU) processome, first precursor of the small eukaryotic ribosomal subunit. During the assembly of the SSU processome in the nucleolus, many ribosome biogenesis factors, an RNA chaperone and ribosomal proteins associate with the nascent pre-rRNA and work in concert to generate RNA folding, modifications, rearrangements and cleavage as well as targeted degradation of pre-ribosomal RNA by the RNA exosome. In Mus musculus (Mouse), this protein is Small ribosomal subunit protein uS17 (Rps11).